Here is a 172-residue protein sequence, read N- to C-terminus: Disulfide bond formation protein B (172 aa).

Topologically, residues 1–11 (MNPFRWSFRAQ) are cytoplasmic. Residues 12-28 (FLLGFLACAGLLAYAIY) traverse the membrane as a helical segment. Over 29 to 46 (VQLHLGLEPCPLCIFQRI) the chain is Periplasmic. The cysteines at positions 38 and 41 are disulfide-linked. Residues 47 to 63 (AFAALAMFFLLGALHGP) traverse the membrane as a helical segment. The Cytoplasmic segment spans residues 64–70 (RAAAGRK). A helical membrane pass occupies residues 71 to 88 (VYGVLSFIAAGVGMGIAA). Residues 89–145 (RHVWVQIRPKDMMSSCGPPLSFLSETMGPFEVFRTVLTGTGDCGNIDWRFLGLSMPM) are Periplasmic-facing. Cys104 and Cys131 are disulfide-bonded. The helical transmembrane segment at 146–164 (WSMVWFVGLALWALYAGFK) threads the bilayer. The Cytoplasmic segment spans residues 165–172 (ARRSSVHH).

It belongs to the DsbB family.

It is found in the cell inner membrane. Required for disulfide bond formation in some periplasmic proteins. Acts by oxidizing the DsbA protein. This Xanthomonas euvesicatoria pv. vesicatoria (strain 85-10) (Xanthomonas campestris pv. vesicatoria) protein is Disulfide bond formation protein B.